The chain runs to 105 residues: Small ribosomal subunit protein uS10 (105 aa).

It belongs to the universal ribosomal protein uS10 family. As to quaternary structure, part of the 30S ribosomal subunit.

In terms of biological role, involved in the binding of tRNA to the ribosomes. In Anaplasma marginale (strain Florida), this protein is Small ribosomal subunit protein uS10.